A 463-amino-acid chain; its full sequence is tRNA modification GTPase MnmE (463 aa).

Arg-30, Glu-92, and Arg-132 together coordinate (6S)-5-formyl-5,6,7,8-tetrahydrofolate. Residues 227–386 form the TrmE-type G domain; sequence GLRVALVGRP…LVQAVLERCG (160 aa). Asn-237 lines the K(+) pocket. Residues 237–242, 256–262, 281–284, and 342–345 each bind GTP; these read NVGKSS, TDLPGTT, DTAG, and NKAD. Ser-241 is a binding site for Mg(2+). K(+)-binding residues include Thr-256, Leu-258, and Thr-261. Thr-262 lines the Mg(2+) pocket. Lys-463 is a (6S)-5-formyl-5,6,7,8-tetrahydrofolate binding site.

Belongs to the TRAFAC class TrmE-Era-EngA-EngB-Septin-like GTPase superfamily. TrmE GTPase family. In terms of assembly, homodimer. Heterotetramer of two MnmE and two MnmG subunits. K(+) serves as cofactor.

It is found in the cytoplasm. In terms of biological role, exhibits a very high intrinsic GTPase hydrolysis rate. Involved in the addition of a carboxymethylaminomethyl (cmnm) group at the wobble position (U34) of certain tRNAs, forming tRNA-cmnm(5)s(2)U34. The protein is tRNA modification GTPase MnmE of Synechococcus sp. (strain CC9311).